Reading from the N-terminus, the 756-residue chain is 3-O-alpha-D-glucosyl-L-rhamnose phosphorylase (756 aa).

358–359 lines the substrate pocket; it reads WD. Glu486 serves as the catalytic Proton donor. 590–591 is a substrate binding site; the sequence is KQ.

The protein belongs to the glycosyl hydrolase 65 family. In terms of assembly, monomer.

The protein localises to the cytoplasm. It carries out the reaction 3-O-alpha-D-glucosyl-L-rhamnose + phosphate = beta-D-glucose 1-phosphate + L-rhamnopyranose. In terms of biological role, phosphorylase showing strict alpha-1,3-regioselectivity and producing 3-O-alpha-D-glucopyranosyl-L-rhamnopyranose. Specific for L-rhamnose as acceptor and beta-D-glucose 1-phosphate as donor. Does not phosphorylate alpha,alpha-trehalose, kojibiose, nigerose, or maltose. The protein is 3-O-alpha-D-glucosyl-L-rhamnose phosphorylase of Lachnoclostridium phytofermentans (strain ATCC 700394 / DSM 18823 / ISDg) (Clostridium phytofermentans).